The sequence spans 411 residues: Carbohydrate sulfotransferase 1 (411 aa).

Met1 is a topological domain (cytoplasmic). Residues 2–23 (QCSWKAVLLLALASIAIQYTAI) traverse the membrane as a helical; Signal-anchor for type II membrane protein segment. Over 24 to 411 (RTFTAKSFHT…VEERDFRPFL (388 aa)) the chain is Lumenal. N-linked (GlcNAc...) asparagine glycosylation is present at Asn56. A 3'-phosphoadenylyl sulfate-binding site is contributed by 69 to 75 (TRSGSSF). 2 N-linked (GlcNAc...) asparagine glycosylation sites follow: Asn145 and Asn189. 234–242 (RDPRGILAS) serves as a coordination point for 3'-phosphoadenylyl sulfate. An N-linked (GlcNAc...) asparagine glycan is attached at Asn334. A Cell attachment site motif is present at residues 337 to 339 (RGD).

It belongs to the sulfotransferase 1 family. Gal/GlcNAc/GalNAc subfamily.

The protein resides in the golgi apparatus membrane. It catalyses the reaction 3'-phosphoadenylyl sulfate + keratan = adenosine 3',5'-bisphosphate + keratan 6'-sulfate.. It functions in the pathway glycan metabolism. In terms of biological role, sulfotransferase that utilizes 3'-phospho-5'-adenylyl sulfate (PAPS) as sulfonate donor to catalyze the transfer of sulfate to position 6 of internal galactose (Gal) residues of keratan. Cooperates with B4GALT4 and B3GNT7 glycosyltransferases and CHST6 sulfotransferase to construct and elongate disulfated disaccharide unit [-&gt;3(6-sulfoGalbeta)1-&gt;4(6-sulfoGlcNAcbeta)1-&gt;] within keratan sulfate polymer. Has a preference for sulfating keratan sulfate, but it also transfers sulfate to the unsulfated polymer. Involved in biosynthesis of phosphacan, a major keratan sulfate proteoglycan in the developing brain. Involved in biosynthesis of 6-sulfoGalbeta-containing O-linked glycans in high endothelial venules of lymph nodes. May act in a synergistic manner with CHST4 to generate sialyl 6',6-disulfo Lewis X motif, a recognition determinant for immune cell receptors implicated in leukocyte trafficking. Catalyzes sulfation of N-acetyllactosamine (LacNAc) oligosaccharides with highest efficiency for sialylated LacNAc structures. The chain is Carbohydrate sulfotransferase 1 (Chst1) from Rattus norvegicus (Rat).